The primary structure comprises 232 residues: 5'-methylthioadenosine/S-adenosylhomocysteine nucleosidase (232 aa).

Glutamate 12 serves as the catalytic Proton acceptor. Residues glycine 78, isoleucine 152, and 173–174 (ME) each bind substrate. The active-site Proton donor is the aspartate 197.

This sequence belongs to the PNP/UDP phosphorylase family. MtnN subfamily. In terms of assembly, homodimer.

It carries out the reaction S-adenosyl-L-homocysteine + H2O = S-(5-deoxy-D-ribos-5-yl)-L-homocysteine + adenine. The catalysed reaction is S-methyl-5'-thioadenosine + H2O = 5-(methylsulfanyl)-D-ribose + adenine. It catalyses the reaction 5'-deoxyadenosine + H2O = 5-deoxy-D-ribose + adenine. It functions in the pathway amino-acid biosynthesis; L-methionine biosynthesis via salvage pathway; S-methyl-5-thio-alpha-D-ribose 1-phosphate from S-methyl-5'-thioadenosine (hydrolase route): step 1/2. Its function is as follows. Catalyzes the irreversible cleavage of the glycosidic bond in both 5'-methylthioadenosine (MTA) and S-adenosylhomocysteine (SAH/AdoHcy) to adenine and the corresponding thioribose, 5'-methylthioribose and S-ribosylhomocysteine, respectively. Also cleaves 5'-deoxyadenosine, a toxic by-product of radical S-adenosylmethionine (SAM) enzymes, into 5-deoxyribose and adenine. Thus, is required for in vivo function of the radical SAM enzymes biotin synthase and lipoic acid synthase, that are inhibited by 5'-deoxyadenosine accumulation. The polypeptide is 5'-methylthioadenosine/S-adenosylhomocysteine nucleosidase (Cronobacter sakazakii (strain ATCC BAA-894) (Enterobacter sakazakii)).